Here is a 105-residue protein sequence, read N- to C-terminus: DNA-directed RNA polymerase subunit Rpo13 (105 aa).

2 stretches are compositionally biased toward basic and acidic residues: residues 1 to 10 (MSEDDSKKEP) and 70 to 80 (FDDVARSYSKA). Disordered regions lie at residues 1 to 35 (MSED…GGEF) and 70 to 105 (FDDV…EEEE). Over residues 81–97 (DKKKRRVEKKPKKGKVT) the composition is skewed to basic residues.

This sequence belongs to the archaeal Rpo13 RNA polymerase subunit family. In terms of assembly, part of the 13-subunit RNA polymerase.

The protein localises to the cytoplasm. It carries out the reaction RNA(n) + a ribonucleoside 5'-triphosphate = RNA(n+1) + diphosphate. Functionally, DNA-dependent RNA polymerase catalyzes the transcription of DNA into RNA using the four ribonucleoside triphosphates as substrates. In vitro binds dsDNA but not ssDNA. This is DNA-directed RNA polymerase subunit Rpo13 from Sulfolobus acidocaldarius (strain ATCC 33909 / DSM 639 / JCM 8929 / NBRC 15157 / NCIMB 11770).